A 267-amino-acid chain; its full sequence is tRNA-cytidine(32) 2-sulfurtransferase (267 aa).

The PP-loop motif motif lies at Ser-37–Ser-42. Residues Cys-112, Cys-115, and Cys-203 each contribute to the [4Fe-4S] cluster site.

The protein belongs to the TtcA family. In terms of assembly, homodimer. It depends on Mg(2+) as a cofactor. Requires [4Fe-4S] cluster as cofactor.

Its subcellular location is the cytoplasm. It carries out the reaction cytidine(32) in tRNA + S-sulfanyl-L-cysteinyl-[cysteine desulfurase] + AH2 + ATP = 2-thiocytidine(32) in tRNA + L-cysteinyl-[cysteine desulfurase] + A + AMP + diphosphate + H(+). It functions in the pathway tRNA modification. Its function is as follows. Catalyzes the ATP-dependent 2-thiolation of cytidine in position 32 of tRNA, to form 2-thiocytidine (s(2)C32). The sulfur atoms are provided by the cysteine/cysteine desulfurase (IscS) system. This is tRNA-cytidine(32) 2-sulfurtransferase from Dichelobacter nodosus (strain VCS1703A).